The chain runs to 498 residues: MMRLRTLLQPWLDLTDADDRPVGGLAVDSRDIEPGFVFVALRGSRHHGLGYLGDALAAGAGAVLWEPAGDVAPEPDERTAAERAGVPLIAVPDLGRRLGPIAARLYGDPSARMRVVGVTGTDGKTSVTQYLAQLLDREAHRCGLVGTLGSGFPDSLQPGTHTTPDAASVQRTLARLHRQGAAQVAMEVSSHALDQHRVAGVRFHTAVLTNLGRDHLDYHGDLAGYAEAKSRLFGVPGLQWAVLNLDDAFGRQVHGALAGGTRALGYSLAGHPQAGVRGEGLVLEPQGLRLRLSTEWGEAPVQAPLLGAFNAANVLAVAAAALSLGVALPVIVERLAGLRPVPGRMEPFTRPGRPSVIVDYAHTPAALRGALAAVRAHYRGAVWLVFGCGGDRDRGKRPLMGEAAAELADRVVLTDDNPRREDPDRIIDDIRQGAPGRDWPVLRDRAGAIRHAVERAGPEDVVLVAGKGHETVQQIGDRCLPFSDREAVVQALGEEEGA.

UDP-N-acetyl-alpha-D-muramoyl-L-alanyl-D-glutamate is bound at residue Ser-29. An ATP-binding site is contributed by 120-126 (GTDGKTS). Residues 162–163 (TT), Ser-189, Gln-195, and Arg-197 contribute to the UDP-N-acetyl-alpha-D-muramoyl-L-alanyl-D-glutamate site. An N6-carboxylysine modification is found at Lys-229. Meso-2,6-diaminopimelate-binding positions include Arg-392, 416–419 (DNPR), Gly-466, and Glu-470. The short motif at 416-419 (DNPR) is the Meso-diaminopimelate recognition motif element.

This sequence belongs to the MurCDEF family. MurE subfamily. The cofactor is Mg(2+). Post-translationally, carboxylation is probably crucial for Mg(2+) binding and, consequently, for the gamma-phosphate positioning of ATP.

Its subcellular location is the cytoplasm. It catalyses the reaction UDP-N-acetyl-alpha-D-muramoyl-L-alanyl-D-glutamate + meso-2,6-diaminopimelate + ATP = UDP-N-acetyl-alpha-D-muramoyl-L-alanyl-gamma-D-glutamyl-meso-2,6-diaminopimelate + ADP + phosphate + H(+). It functions in the pathway cell wall biogenesis; peptidoglycan biosynthesis. In terms of biological role, catalyzes the addition of meso-diaminopimelic acid to the nucleotide precursor UDP-N-acetylmuramoyl-L-alanyl-D-glutamate (UMAG) in the biosynthesis of bacterial cell-wall peptidoglycan. The polypeptide is UDP-N-acetylmuramoyl-L-alanyl-D-glutamate--2,6-diaminopimelate ligase (Alkalilimnicola ehrlichii (strain ATCC BAA-1101 / DSM 17681 / MLHE-1)).